An 88-amino-acid polypeptide reads, in one-letter code: Small ribosomal subunit protein bS20 (88 aa).

The disordered stretch occupies residues 1-25 (MANSAQARKRARQATKARAHNASLR). The span at 7–19 (ARKRARQATKARA) shows a compositional bias: basic residues.

It belongs to the bacterial ribosomal protein bS20 family.

In terms of biological role, binds directly to 16S ribosomal RNA. This chain is Small ribosomal subunit protein bS20, found in Azoarcus sp. (strain BH72).